The following is a 229-amino-acid chain: 7-cyano-7-deazaguanine synthase (229 aa).

14–24 (LSGGQDSTTCL) contacts ATP. 4 residues coordinate Zn(2+): cysteine 192, cysteine 200, cysteine 203, and cysteine 206.

This sequence belongs to the QueC family. Requires Zn(2+) as cofactor.

The catalysed reaction is 7-carboxy-7-deazaguanine + NH4(+) + ATP = 7-cyano-7-deazaguanine + ADP + phosphate + H2O + H(+). It participates in purine metabolism; 7-cyano-7-deazaguanine biosynthesis. Its function is as follows. Catalyzes the ATP-dependent conversion of 7-carboxy-7-deazaguanine (CDG) to 7-cyano-7-deazaguanine (preQ(0)). The protein is 7-cyano-7-deazaguanine synthase of Laribacter hongkongensis (strain HLHK9).